Reading from the N-terminus, the 788-residue chain is Cap-specific mRNA (nucleoside-2'-O-)-methyltransferase 1 (788 aa).

The region spanning 25 to 71 is the G-patch domain; sequence YSNKAMEMMKKMGYENDKGLGKSNQGRLEPIIAVQQDGRRGFGLKLD. Substrate-binding positions include 143–147 and Arg158; that span reads KTVFD. Positions 171-384 constitute a RrmJ-type SAM-dependent 2'-O-MTase domain; that stretch reads IFLNRAAVKM…ERYLVCKYKR (214 aa). Asn174 is an S-adenosyl-L-methionine binding site. The active site involves Lys179. 215 to 221 is an S-adenosyl-L-methionine binding site; that stretch reads CAGPGGF. Asp298 is a catalytic residue. 308 to 310 contacts substrate; the sequence is NIQ. Lys338 functions as the Proton acceptor in the catalytic mechanism. Residue Asn373 participates in substrate binding.

In terms of assembly, interacts (via C-terminus) with r2d2 (via C-terminus).

It localises to the nucleus. The protein localises to the cytoplasm. It carries out the reaction a 5'-end (N(7)-methyl 5'-triphosphoguanosine)-ribonucleoside in mRNA + S-adenosyl-L-methionine = a 5'-end (N(7)-methyl 5'-triphosphoguanosine)-(2'-O-methyl-ribonucleoside) in mRNA + S-adenosyl-L-homocysteine + H(+). In terms of biological role, S-adenosyl-L-methionine-dependent methyltransferase that mediates mRNA cap1 2'-O-ribose methylation to the 5'-cap structure of mRNAs. Methylates the ribose of the first nucleotide of a m(7)GpppG-capped mRNA to produce m(7)GpppNmp (cap1). Positively regulates the Ago2-dependent small RNA pathway, with roles in both siRNA biogenesis and RISC assembly. Involved in facilitating conversion of pre-RISC into holo-RISC, possibly by promoting the unwinding of Ago2-bound siRNA duplexes and thus the retention of the guide strand in holo-RISC. The protein is Cap-specific mRNA (nucleoside-2'-O-)-methyltransferase 1 of Drosophila melanogaster (Fruit fly).